The primary structure comprises 227 residues: Acyl-protein thioesterase 1 (227 aa).

Residues Ser-119, Asp-173, and His-207 each act as charge relay system in the active site.

Belongs to the AB hydrolase superfamily. AB hydrolase 2 family.

Its subcellular location is the cytoplasm. The protein resides in the nucleus. The catalysed reaction is S-hexadecanoyl-L-cysteinyl-[protein] + H2O = L-cysteinyl-[protein] + hexadecanoate + H(+). Functionally, hydrolyzes fatty acids from S-acylated cysteine residues in proteins with a strong preference for palmitoylated G-alpha proteins over other acyl substrates. Mediates the deacylation of G-alpha proteins such as GPA1 in vivo, but has weak or no activity toward palmitoylated Ras proteins. Has weak lysophospholipase activity in vitro; however such activity may not exist in vivo. In Yarrowia lipolytica (strain CLIB 122 / E 150) (Yeast), this protein is Acyl-protein thioesterase 1.